We begin with the raw amino-acid sequence, 1004 residues long: Copper-transporting ATPase (1004 aa).

At Met1–Thr262 the chain is on the cytoplasmic side. 2 consecutive HMA domains span residues Arg2–Glu67 and Lys80–Asn146. Cys13, Cys16, Cys91, and Cys94 together coordinate Cu(+). The helical transmembrane segment at Leu263–Val283 threads the bilayer. The Lumenal, vesicle segment spans residues Gln284–Asp303. Residues Ile304–Ala324 form a helical membrane-spanning segment. Residues Ala325 to Thr335 are Cytoplasmic-facing. A helical transmembrane segment spans residues Met336–Val356. The Lumenal, vesicle segment spans residues His357–Arg370. A helical membrane pass occupies residues Ile371–Thr391. At Leu392–Ser528 the chain is on the cytoplasmic side. A helical transmembrane segment spans residues Ile529 to Leu549. Residues Asn550–Ser577 are Lumenal, vesicle-facing. A helical transmembrane segment spans residues Val578 to Gly598. At Thr599–Asn901 the chain is on the cytoplasmic side. Residue Asp627 is the 4-aspartylphosphate intermediate of the active site. The Mg(2+) site is built by Asp838 and Asp842. The helical transmembrane segment at Leu902–Gly924 threads the bilayer. Residues Ile925–Leu927 lie on the Lumenal, vesicle side of the membrane. The chain crosses the membrane as a helical span at residues Pro928–Leu950. At Lys951–Leu1004 the chain is on the cytoplasmic side.

The protein belongs to the cation transport ATPase (P-type) (TC 3.A.3) family. Type IB subfamily. As to quaternary structure, interacts with the copper chaperone ATX1 via the copper anion.

The protein resides in the golgi apparatus. Its subcellular location is the trans-Golgi network membrane. The catalysed reaction is Cu(+)(in) + ATP + H2O = Cu(+)(out) + ADP + phosphate + H(+). Its function is as follows. Copper-transporting P-type ATPase necessary for the proper uptake of iron. Required for export of copper from cytosol into extracytosolic compartment. Retrieves copper from the metallochaperone ATX1 and incorporates it into trans-Golgi vesicles where they are acquired by the cell-surface iron transporter FET3. Required the production of inositolphosphorylceramide D, probably by delivering copper to a yet to be identified enzyme. The protein is Copper-transporting ATPase of Saccharomyces cerevisiae (strain ATCC 204508 / S288c) (Baker's yeast).